We begin with the raw amino-acid sequence, 209 residues long: MTAALRGLYAITDTPLLAGGKLLPYAEAALIGGARLLQYRDKSGDAVRRLDEAQALAELCQRHGATLIINDDLELAAHLGVGLHLGQTDGSLAAARARLGADVVIGGTCHAQLELAERAVAEGASYIAFGRFFNSNTKPGAPAATVELLDQARTRFAQPIVAIGGVTLDNAPGLIARGASMVAVIHALFAADSALEVQDRARAFAALFD.

Residues 38–42 and N70 contribute to the 4-amino-2-methyl-5-(diphosphooxymethyl)pyrimidine site; that span reads QYRDK. The Mg(2+) site is built by D71 and D89. 4-amino-2-methyl-5-(diphosphooxymethyl)pyrimidine is bound at residue T108. Position 135 to 137 (135 to 137) interacts with 2-[(2R,5Z)-2-carboxy-4-methylthiazol-5(2H)-ylidene]ethyl phosphate; the sequence is SNT. K138 lines the 4-amino-2-methyl-5-(diphosphooxymethyl)pyrimidine pocket. G165 serves as a coordination point for 2-[(2R,5Z)-2-carboxy-4-methylthiazol-5(2H)-ylidene]ethyl phosphate.

It belongs to the thiamine-phosphate synthase family. The cofactor is Mg(2+).

It carries out the reaction 2-[(2R,5Z)-2-carboxy-4-methylthiazol-5(2H)-ylidene]ethyl phosphate + 4-amino-2-methyl-5-(diphosphooxymethyl)pyrimidine + 2 H(+) = thiamine phosphate + CO2 + diphosphate. The enzyme catalyses 2-(2-carboxy-4-methylthiazol-5-yl)ethyl phosphate + 4-amino-2-methyl-5-(diphosphooxymethyl)pyrimidine + 2 H(+) = thiamine phosphate + CO2 + diphosphate. The catalysed reaction is 4-methyl-5-(2-phosphooxyethyl)-thiazole + 4-amino-2-methyl-5-(diphosphooxymethyl)pyrimidine + H(+) = thiamine phosphate + diphosphate. The protein operates within cofactor biosynthesis; thiamine diphosphate biosynthesis; thiamine phosphate from 4-amino-2-methyl-5-diphosphomethylpyrimidine and 4-methyl-5-(2-phosphoethyl)-thiazole: step 1/1. Condenses 4-methyl-5-(beta-hydroxyethyl)thiazole monophosphate (THZ-P) and 2-methyl-4-amino-5-hydroxymethyl pyrimidine pyrophosphate (HMP-PP) to form thiamine monophosphate (TMP). The protein is Thiamine-phosphate synthase of Ectopseudomonas mendocina (strain ymp) (Pseudomonas mendocina).